The chain runs to 158 residues: MGRFTFVSFGLLVVFLSLSGTGADFDCIPGWSAYDRYCYQAFSEPKNWEDAESFCEEGVKTSHLVSIESSGEGDFVAQLVSEKIKTSFQYVWIGLRIQNKEQQCRSEWTDASSVNYENLIKQFSKKCYALKKGTELRTWFNVYCGTENPFVCKYTPEC.

The signal sequence occupies residues 1–23 (MGRFTFVSFGLLVVFLSLSGTGA). Intrachain disulfides connect C27–C38, C55–C152, and C127–C144. The 120-residue stretch at 34-153 (YDRYCYQAFS…CGTENPFVCK (120 aa)) folds into the C-type lectin domain.

The protein belongs to the snaclec family. As to quaternary structure, tetramer of 4 heterodimers of alpha and beta subunits; disulfide-linked. Expressed by the venom gland.

It is found in the secreted. Functionally, snaclec that strongly induces platelet aggregation, in a dose-dependent manner. In Protobothrops jerdonii (Jerdon's pitviper), this protein is Snaclec jerdonuxin subunit alpha.